We begin with the raw amino-acid sequence, 598 residues long: Elongation factor 4 (598 aa).

The tr-type G domain maps to 2–184 (QHIRNFSIIA…TVVRRVPPPK (183 aa)). GTP contacts are provided by residues 14-19 (DHGKST) and 131-134 (NKID).

It belongs to the TRAFAC class translation factor GTPase superfamily. Classic translation factor GTPase family. LepA subfamily.

Its subcellular location is the cell inner membrane. The enzyme catalyses GTP + H2O = GDP + phosphate + H(+). Required for accurate and efficient protein synthesis under certain stress conditions. May act as a fidelity factor of the translation reaction, by catalyzing a one-codon backward translocation of tRNAs on improperly translocated ribosomes. Back-translocation proceeds from a post-translocation (POST) complex to a pre-translocation (PRE) complex, thus giving elongation factor G a second chance to translocate the tRNAs correctly. Binds to ribosomes in a GTP-dependent manner. In Aromatoleum aromaticum (strain DSM 19018 / LMG 30748 / EbN1) (Azoarcus sp. (strain EbN1)), this protein is Elongation factor 4.